A 535-amino-acid chain; its full sequence is BAR/IMD domain-containing adapter protein 2 (535 aa).

One can recognise an IMD domain in the interval 1 to 250 (MSLSRSEEMH…VQLMQQMANS (250 aa)). Residues 88 to 153 (NQLEETLKSF…LRKKSQGSKN (66 aa)) are a coiled coil. 4 positions are modified to phosphoserine: Ser262, Ser324, Ser326, and Ser337. The disordered stretch occupies residues 299–370 (VMNGVAGPDS…TLPRSSSMAA (72 aa)). Residues 321–335 (QPKSLSPPQSQSKLS) show a composition bias toward low complexity. The residue at position 341 (Thr341) is a Phosphothreonine. Ser347 is modified (phosphoserine). Residues 349–368 (TPKNSYATTENKTLPRSSSM) show a composition bias toward polar residues. Thr361 carries the phosphothreonine modification. Phosphoserine is present on residues Ser367, Ser385, Ser396, and Ser455. Positions 375–438 (NGRMRVKAIF…PFSYTRVLDS (64 aa)) constitute an SH3 domain. The disordered stretch occupies residues 445–477 (HMSLQQGKSSSTGNLLDKDDLALPPPDYGTSSR). Residues 447–458 (SLQQGKSSSTGN) show a composition bias toward polar residues.

In terms of assembly, homodimer. Interacts with CDC42 and RAC1 that have been activated by GTP binding. Binds DIAPH1. Interacts with ATN1, ADGRB1, SHANK1, SHANK2, SHANK3, TIAM1, WASF1 and WASF2. Interacts with ENAH after recruitment of CDC42. Interacts with EPS8. In terms of processing, phosphorylated on tyrosine residues by INSR in response to insulin treatment. As to expression, detected in liver, brain, olfactory bulb, brain cortex, caudate putamen, hypothalamus and cerebellum.

Its subcellular location is the cytoplasm. The protein localises to the membrane. It is found in the cell projection. It localises to the filopodium. The protein resides in the ruffle. Its subcellular location is the cytoskeleton. Functionally, adapter protein that links membrane-bound small G-proteins to cytoplasmic effector proteins. Necessary for CDC42-mediated reorganization of the actin cytoskeleton and for RAC1-mediated membrane ruffling. Involved in the regulation of the actin cytoskeleton by WASF family members and the Arp2/3 complex. Plays a role in neurite growth. Acts syngeristically with ENAH to promote filipodia formation. Plays a role in the reorganization of the actin cytoskeleton in response to bacterial infection. Participates in actin bundling when associated with EPS8, promoting filopodial protrusions. This Mus musculus (Mouse) protein is BAR/IMD domain-containing adapter protein 2 (Baiap2).